The sequence spans 757 residues: MDVNPTLLFLKVPAQNAISTTFPYTGDPPYSHGTGTGYTMDTVNRTHQYSERGKWTINTETGAPQLNPIDGPLPEDNEPTGYAQTDCVLEAMAFLEKSHPGIFENSCLETMEVVQQTRVDKLTQGRQTFDWTLNRNQPAATALANTIEVFRLNGLTTSESGRLIDFLKDVMESMEKEEMEIVTHFQRKRRVRDNMTKKMVTQRTIGKKKQKLNRRGYLIRALTLNTMTKDAERGKLKRRAIATPGMQIRGFVYFVETLARSICEKLEQSGLPVGGNEKKAKLANVVRKMMTNSQDTELSFTITGDNTKWNENQNPRMFLAMITYITRNQPEWFRNVLSVAPIMFSNKMARLGKGYMFESKNMKLRTQIPAEMLSSIDLRYFNDSTRRKIEKIRPLLIEGAASLSPGMMMGMFNMLSTVLGVSILNLGQKEYTKTSYWWDGLQSSDDFALIVNAPNHEGIQAGVDRFYRTCKLLGINMSKKKSYINRTGTFEFTSFFYRYGFVANFSMELPSFGVSGINESADMSIGVTVIKNNMINNDLGPATAQMALQLFIKDYRYTYRCHRGDTQIQTRRSFEIKKLWDQTRSKAGLLVSDGGPNLYNIRNLHIPEVCLKWELMDKDYQGRLCNPLNPFVSHKEIESVNNAVVMPSHGPAKTMEYDAVATTHSWVPKRNRSILNTSQRGILEDEQMYQKCCNLFEKFFPSSSYRRPVGISSMVEAMVSRARIDARIDFESGRIKKEDFAEIMKICSTIEDLRRQK.

2 short sequence motifs (nuclear localization signal) span residues 187 to 195 and 203 to 216; these read RKRRVRDNM and RTIG…NRRG. The promoter-binding site stretch occupies residues 249-256; sequence RGFVYFVE. One can recognise a RdRp catalytic domain in the interval 286-483; the sequence is VRKMMTNSQD…GINMSKKKSY (198 aa).

Belongs to the influenza viruses polymerase PB1 family. Influenza RNA polymerase is composed of three subunits: PB1, PB2 and PA. Interacts (via N-terminus) with PA (via C-terminus). Interacts (via C-terminus) with PB2 (via N-terminus); this interaction is essential for transcription initiation. Interacts (via C-terminus) with human PKP2 (via N-terminus); the interaction competitively inhibits the interaction between the RNA polymerase subunits PB1 and PB2. Post-translationally, phosphorylated by host PRKCA.

It localises to the host nucleus. Its subcellular location is the host cytoplasm. It catalyses the reaction RNA(n) + a ribonucleoside 5'-triphosphate = RNA(n+1) + diphosphate. In terms of biological role, RNA-dependent RNA polymerase which is responsible for replication and transcription of virus RNA segments. The transcription of viral mRNAs occurs by a unique mechanism called cap-snatching. 5' methylated caps of cellular mRNAs are cleaved after 10-13 nucleotides by PA. In turn, these short capped RNAs are used as primers by PB1 for transcription of viral mRNAs. During virus replication, PB1 initiates RNA synthesis and copy vRNA into complementary RNA (cRNA) which in turn serves as a template for the production of more vRNAs. The polypeptide is RNA-directed RNA polymerase catalytic subunit (Aves (Human)).